The following is a 305-amino-acid chain: N-acetylmuramic acid 6-phosphate etherase (305 aa).

An SIS domain is found at A54–K217. The Proton donor role is filled by E82. The active site involves E113.

Belongs to the GCKR-like family. MurNAc-6-P etherase subfamily. Homodimer.

It carries out the reaction N-acetyl-D-muramate 6-phosphate + H2O = N-acetyl-D-glucosamine 6-phosphate + (R)-lactate. The protein operates within amino-sugar metabolism; N-acetylmuramate degradation. Its function is as follows. Specifically catalyzes the cleavage of the D-lactyl ether substituent of MurNAc 6-phosphate, producing GlcNAc 6-phosphate and D-lactate. This chain is N-acetylmuramic acid 6-phosphate etherase, found in Deinococcus radiodurans (strain ATCC 13939 / DSM 20539 / JCM 16871 / CCUG 27074 / LMG 4051 / NBRC 15346 / NCIMB 9279 / VKM B-1422 / R1).